The chain runs to 4644 residues: Cytoplasmic dynein 1 heavy chain 1 (4644 aa).

Serine 2 bears the N-acetylserine mark. The interval 2–1865 (SETGGGEDGS…SIQMANAKFN (1864 aa)) is stem. Coiled-coil stretches lie at residues 48–69 (AALEAALEEKSALEQMRKFLSD), 179–200 (SVEKKIAELEMGLLHLQQNIEI), 453–476 (AHRKLQARLDQMRKFRRQHEQLRA), and 541–564 (TEAWEAAMKRYDERIDRVETRITA). Residue serine 68 is modified to Phosphoserine. The segment at 446 to 701 (MVWRINPAHR…NTQEIFDDWA (256 aa)) is interaction with DYNC1I2. The interaction with DYNC1LI2 stretch occupies residues 649–800 (AKQIDRQLTA…EKVEERNTIS (152 aa)). Lysine 1123 carries the N6-acetyllysine modification. Residues 1169-1201 (TYVQSLKRKIKQFEKQVELYRNGQRLLEKQRFQ) adopt a coiled-coil conformation. A Phosphoserine modification is found at serine 1228. 2 coiled-coil regions span residues 1229 to 1250 (AIQQQVANLQMKIVQEDRAVES) and 1355 to 1371 (RKLRQNLDGLLNQLKNF). 4 AAA regions span residues 1866 to 2097 (YGFE…VLVS), 2178 to 2450 (EELK…LTRL), 2554 to 2803 (EVET…WVRG), and 2897 to 3166 (VFYE…GGRT). ATP is bound by residues 1904–1911 (GPAGTGKT) and 2222–2229 (GPSGSGKS). The interval 2389–2409 (EDEAQRRRKGKEDEGEEAASP) is disordered. ATP is bound by residues 2593–2600 (GPPGSGKT) and 2935–2942 (GVSGAGKT). Coiled-coil stretches lie at residues 3187–3273 (EKRS…ADKQ), 3394–3498 (AIAQ…KNQM), and 3735–3798 (EFQL…VSQQ). The interval 3187–3498 (EKRSELEEQQ…KTSETFKNQM (312 aa)) is stalk. Lysine 3478 carries the N6-acetyllysine modification. AAA stretches follow at residues 3551–3780 (LSNA…EVTR) and 4003–4219 (AHMF…TVDT). Serine 4160 carries the phosphoserine modification. An N6-acetyllysine modification is found at lysine 4281. Phosphothreonine is present on threonine 4364.

Belongs to the dynein heavy chain family. Homodimer. The cytoplasmic dynein 1 complex consists of two catalytic heavy chains (HCs) and a number of non-catalytic subunits presented by intermediate chains (ICs), light intermediate chains (LICs) and light chains (LCs); the composition seems to vary in respect to the IC, LIC and LC composition. The heavy chain homodimer serves as a scaffold for the probable homodimeric assembly of the respective non-catalytic subunits. The ICs and LICs bind directly to the HC dimer and dynein LCs assemble on the IC dimer. Interacts with DYNC1LI1; DYNC1LI1 and DYNC1LI2 bind mutually exclusive to DYNC1H1. Interacts with DYNC1LI2; DYNC1LI1 and DYNC1LI2 bind mutually exclusive to DYNC1H1. Interacts with DYNC1I2. Interacts with BICD2. Interacts with DNALI1.

It is found in the cytoplasm. The protein localises to the cytoskeleton. Functionally, cytoplasmic dynein 1 acts as a motor for the intracellular retrograde motility of vesicles and organelles along microtubules. Dynein has ATPase activity; the force-producing power stroke is thought to occur on release of ADP. Plays a role in mitotic spindle assembly and metaphase plate congression. In Rattus norvegicus (Rat), this protein is Cytoplasmic dynein 1 heavy chain 1 (Dync1h1).